Reading from the N-terminus, the 319-residue chain is Dehydrogenase/reductase SDR family member 9 (319 aa).

The N-terminal stretch at 1–17 (MLFWVLGLLILCGFLWT) is a signal peptide. NAD(+) contacts are provided by residues 34 to 58 (ITGC…HVIA) and aspartate 83. Serine 164 provides a ligand contact to substrate. Residue tyrosine 176 is the Proton acceptor of the active site. Lysine 180 contacts NAD(+).

The protein belongs to the short-chain dehydrogenases/reductases (SDR) family. As to quaternary structure, homotetramer. As to expression, highly expressed in trachea and epidermis. Detected at lower levels in spinal cord, bone marrow, brain, tongue, esophagus, heart, colon, testis, placenta, lung, skeletal muscle and lymph node.

The protein resides in the microsome membrane. It localises to the endoplasmic reticulum membrane. It catalyses the reaction 3beta-hydroxy-5alpha-pregnane-20-one + NAD(+) = 5alpha-pregnane-3,20-dione + NADH + H(+). It carries out the reaction 17beta-hydroxy-5alpha-androstan-3-one + NAD(+) = 5alpha-androstan-3,17-dione + NADH + H(+). The enzyme catalyses androsterone + NAD(+) = 5alpha-androstan-3,17-dione + NADH + H(+). The catalysed reaction is 5alpha-androstane-3alpha,17beta-diol + NAD(+) = 17beta-hydroxy-5alpha-androstan-3-one + NADH + H(+). It catalyses the reaction all-trans-retinol + NAD(+) = all-trans-retinal + NADH + H(+). It carries out the reaction 3alpha-hydroxy-5alpha-pregnan-20-one + NAD(+) = 5alpha-pregnane-3,20-dione + NADH + H(+). 3-alpha-hydroxysteroid dehydrogenase that converts 3-alpha-tetrahydroprogesterone (allopregnanolone) to dihydroxyprogesterone and 3-alpha-androstanediol to dihydroxyprogesterone. Also plays a role in the biosynthesis of retinoic acid from retinaldehyde. Can utilize both NADH and NADPH. In Homo sapiens (Human), this protein is Dehydrogenase/reductase SDR family member 9 (DHRS9).